A 362-amino-acid polypeptide reads, in one-letter code: Cytochrome P450 monooxygenase-like protein avaN (362 aa).

The helical transmembrane segment at 3–23 threads the bilayer; the sequence is VILAIFIAAAGCLFSSWRIYW.

This sequence belongs to the cytochrome P450 family.

Its subcellular location is the membrane. Its pathway is secondary metabolite biosynthesis. Its function is as follows. Cytochrome P450 monooxygenase-like protein; part of the cluster that mediates the biosynthesis of a highly modified cyclo-arginine-tryptophan dipeptide (cRW). The first step of the pathway is perfornmed by the arginine-containing cyclodipeptide synthase (RCPDS) avaA that acts as the scaffold-generating enzyme and is responsible for formation of the cyclo-Arg-Trp (cRW) diketopiperazine. AvaB then acts as a multifunctional flavoenzyme that is responsible for generating the cyclo-Arg-formylkynurenine DKP, which can be deformylated by avaC. AvaB then further catalyzes an additional N-oxidation followed by cyclization and dehydration. The next step is an N-acetylation of the guanidine group catalyzed by the arginine N-acetyltransferase avaD. The roles of the additional enzymes identified within the ava cluster still have to be determined. The polypeptide is Cytochrome P450 monooxygenase-like protein avaN (Aspergillus versicolor).